The following is a 308-amino-acid chain: Dual oxidase maturation factor 1 (308 aa).

Over 1 to 21 the chain is Extracellular; that stretch reads MQANIFPFYPQPRTPFKFDTK. A helical membrane pass occupies residues 22–42; that stretch reads IIEIIIICIVTACTFIIILPG. Residues 43–49 lie on the Cytoplasmic side of the membrane; sequence IRGKSRS. A helical membrane pass occupies residues 50 to 70; the sequence is IWLLRILTSLFIGAVILAVNF. Residues 71-91 are Extracellular-facing; sequence TSDWEMGTITATTVYKSFSHS. A helical membrane pass occupies residues 92–112; the sequence is MLNASIGLWIGLKGLNITLIG. Residues 113–175 lie on the Cytoplasmic side of the membrane; that stretch reads NPEYQLNETI…GLFQQYCIST (63 aa). Residues 176-198 traverse the membrane as a helical segment; that stretch reads YYSSGIMWIAFCSWILYNVLFSM. Residue proline 199 is a topological domain, extracellular. Residues 200 to 220 traverse the membrane as a helical segment; sequence VILYGIYMMFVTAICMLVSLI. The Cytoplasmic segment spans residues 221–247; it reads SFASVRKAPVCNIQFGNSILKTHFGVS. A helical transmembrane segment spans residues 248–268; sequence YWLSLITGLLCLIISLVLLFL. The Extracellular segment spans residues 269-308; it reads YKTQPKVLQLIFSYGEEEDLSNKSENEEEHSSVLSLNEIL. N-linked (GlcNAc...) asparagine glycosylation is present at asparagine 290.

It belongs to the DUOXA family.

The protein resides in the membrane. In terms of biological role, possible role in maturation and transport from the endoplasmic reticulum to the plasma membrane of functional dual oxidase. This chain is Dual oxidase maturation factor 1 (duoxa1), found in Xenopus laevis (African clawed frog).